Consider the following 138-residue polypeptide: Nucleoside diphosphate kinase (138 aa).

ATP contacts are provided by lysine 9, phenylalanine 57, arginine 85, threonine 91, arginine 102, and asparagine 112. Catalysis depends on histidine 115, which acts as the Pros-phosphohistidine intermediate.

This sequence belongs to the NDK family. As to quaternary structure, homotetramer. The cofactor is Mg(2+).

The protein resides in the cytoplasm. The catalysed reaction is a 2'-deoxyribonucleoside 5'-diphosphate + ATP = a 2'-deoxyribonucleoside 5'-triphosphate + ADP. It catalyses the reaction a ribonucleoside 5'-diphosphate + ATP = a ribonucleoside 5'-triphosphate + ADP. Functionally, major role in the synthesis of nucleoside triphosphates other than ATP. The ATP gamma phosphate is transferred to the NDP beta phosphate via a ping-pong mechanism, using a phosphorylated active-site intermediate. This is Nucleoside diphosphate kinase from Deinococcus geothermalis (strain DSM 11300 / CIP 105573 / AG-3a).